A 115-amino-acid chain; its full sequence is NADH-ubiquinone oxidoreductase chain 3 (115 aa).

Helical transmembrane passes span 5 to 25, 55 to 75, and 86 to 106; these read LTLM…FWLP, FFLV…LLPL, and LMLT…AYEW.

Belongs to the complex I subunit 3 family. In terms of assembly, core subunit of respiratory chain NADH dehydrogenase (Complex I) which is composed of 45 different subunits. Interacts with TMEM186. Interacts with TMEM242.

It is found in the mitochondrion inner membrane. The catalysed reaction is a ubiquinone + NADH + 5 H(+)(in) = a ubiquinol + NAD(+) + 4 H(+)(out). In terms of biological role, core subunit of the mitochondrial membrane respiratory chain NADH dehydrogenase (Complex I) which catalyzes electron transfer from NADH through the respiratory chain, using ubiquinone as an electron acceptor. Essential for the catalytic activity of complex I. This chain is NADH-ubiquinone oxidoreductase chain 3, found in Avahi cleesei (Cleese's woolly lemur).